Reading from the N-terminus, the 324-residue chain is 4-hydroxybenzoyl-CoA reductase subunit beta (324 aa).

In terms of domain architecture, FAD-binding PCMH-type spans 2 to 217 (NILTDFRTHR…AAIEVPPTGA (216 aa)). Residues 29–36 (PLGAGTDL), Thr111, Asn115, and Gln118 each bind FAD. [4Fe-4S] cluster is bound by residues Cys122, Cys138, Cys146, and Cys155. 2 residues coordinate FAD: Asp162 and Lys224.

In terms of assembly, heterohexamer of two alpha, two beta and two gamma subunits. Requires FAD as cofactor. [4Fe-4S] cluster serves as cofactor.

It catalyses the reaction oxidized 2[4Fe-4S]-[ferredoxin] + benzoyl-CoA + H2O = 4-hydroxybenzoyl-CoA + reduced 2[4Fe-4S]-[ferredoxin] + 2 H(+). Inactivated by low concentrations of cyanide in vitro. In terms of biological role, component of a complex that catalyzes the reductive dehydroxylation of 4-hydroxybenzoyl-CoA to benzoyl-CoA. Reaction is not reversible. Is a key enzyme in the anaerobic degradation of phenolic compounds. The polypeptide is 4-hydroxybenzoyl-CoA reductase subunit beta (hcrB) (Thauera aromatica).